The sequence spans 328 residues: LOB domain-containing protein 27 (328 aa).

The 102-residue stretch at 35–136 (GACAACKYQR…EELKAVNSQL (102 aa)) folds into the LOB domain.

Belongs to the LOB domain-containing protein family.

The sequence is that of LOB domain-containing protein 27 (LBD27) from Arabidopsis thaliana (Mouse-ear cress).